A 438-amino-acid chain; its full sequence is UPF0597 protein YE0448 (438 aa).

Belongs to the UPF0597 family.

The sequence is that of UPF0597 protein YE0448 from Yersinia enterocolitica serotype O:8 / biotype 1B (strain NCTC 13174 / 8081).